A 275-amino-acid chain; its full sequence is Large ribosomal subunit protein uL2 (275 aa).

The interval Ala208–Lys275 is disordered. 2 stretches are compositionally biased toward basic residues: residues Gly209 to Thr219 and Lys254 to Arg263.

The protein belongs to the universal ribosomal protein uL2 family. Part of the 50S ribosomal subunit. Forms a bridge to the 30S subunit in the 70S ribosome.

Its function is as follows. One of the primary rRNA binding proteins. Required for association of the 30S and 50S subunits to form the 70S ribosome, for tRNA binding and peptide bond formation. It has been suggested to have peptidyltransferase activity; this is somewhat controversial. Makes several contacts with the 16S rRNA in the 70S ribosome. The chain is Large ribosomal subunit protein uL2 from Coxiella burnetii (strain CbuK_Q154) (Coxiella burnetii (strain Q154)).